Consider the following 833-residue polypeptide: Bifunctional dethiobiotin synthetase/7,8-diamino-pelargonic acid aminotransferase, mitochondrial (833 aa).

The N-terminal 23 residues, 1–23 (MIPVTATLIRHRLRHLRHRIRFK), are a transit peptide targeting the mitochondrion. The tract at residues 36 to 299 (HPTYLIWSAN…VLVLPPVPKD (264 aa)) is dethiobiotin synthetase. 47 to 52 (SLGKTL) contributes to the ATP binding site. Residue Thr-51 participates in Mg(2+) binding. Residue Thr-81 participates in substrate binding. Asp-88 serves as a coordination point for Mg(2+). ATP contacts are provided by residues Asp-97, 210 to 213 (ETAG), and 270 to 271 (ED). Glu-210 contacts Mg(2+). The interval 332 to 830 (RLNGMAKLAG…TKLYKRLGEF (499 aa)) is 7,8-diamino-pelargonic acid aminotransferase. 391-392 (WW) lines the (8S)-8-amino-7-oxononanoate pocket. Pyridoxal 5'-phosphate is bound at residue 453 to 454 (GS). Tyr-495 is a (8S)-8-amino-7-oxononanoate binding site. ATP-binding positions include 518–520 (PWY) and Glu-545. A pyridoxal 5'-phosphate-binding site is contributed by Asp-637. 2 residues coordinate (8S)-8-amino-7-oxononanoate: Lys-666 and Gly-700. The residue at position 666 (Lys-666) is an N6-(pyridoxal phosphate)lysine. A pyridoxal 5'-phosphate-binding site is contributed by 701 to 702 (HS). Arg-797 contributes to the (8S)-8-amino-7-oxononanoate binding site.

The protein in the N-terminal section; belongs to the dethiobiotin synthetase family. It in the C-terminal section; belongs to the class-III pyridoxal-phosphate-dependent aminotransferase family. BioA subfamily. As to quaternary structure, homodimer. Requires Mg(2+) as cofactor. Pyridoxal 5'-phosphate is required as a cofactor.

The protein localises to the mitochondrion matrix. It carries out the reaction (7R,8S)-7,8-diammoniononanoate + CO2 + ATP = (4R,5S)-dethiobiotin + ADP + phosphate + 3 H(+). The catalysed reaction is (8S)-8-amino-7-oxononanoate + S-adenosyl-L-methionine = S-adenosyl-4-methylsulfanyl-2-oxobutanoate + (7R,8S)-7,8-diammoniononanoate. The protein operates within cofactor biosynthesis; biotin biosynthesis; biotin from 7,8-diaminononanoate: step 1/2. It participates in cofactor biosynthesis; biotin biosynthesis; 7,8-diaminononanoate from 8-amino-7-oxononanoate (SAM route): step 1/1. Bifunctional enzyme that catalyzes two different reactions involved in the biotin biosynthesis. In terms of biological role, catalyzes a mechanistically unusual reaction, the ATP-dependent insertion of CO2 between the N7 and N8 nitrogen atoms of 7,8-diaminopelargonic acid (DAPA) to form an ureido ring. Functionally, catalyzes the transfer of the alpha-amino group from S-adenosyl-L-methionine (SAM) to 7-keto-8-aminopelargonic acid (KAPA) to form 7,8-diaminopelargonic acid (DAPA). It is the only aminotransferase known to utilize SAM as an amino donor. The sequence is that of Bifunctional dethiobiotin synthetase/7,8-diamino-pelargonic acid aminotransferase, mitochondrial from Arabidopsis thaliana (Mouse-ear cress).